The primary structure comprises 353 residues: Photosystem II protein D1 (353 aa).

Residue T2 is modified to N-acetylthreonine. T2 bears the Phosphothreonine mark. 3 helical membrane-spanning segments follow: residues 29–46 (YIGWFGVLMIPTLLTATS), 118–133 (HFLLGVACYMGREWEL), and 142–156 (WIAVAYSAPVAAATA). H118 is a chlorophyll a binding site. Pheophytin a is bound at residue Y126. D170 and E189 together coordinate [CaMn4O5] cluster. The chain crosses the membrane as a helical span at residues 197-218 (FHMLGVAGVFGGSLFSAMHGSL). H198 serves as a coordination point for chlorophyll a. A quinone is bound by residues H215 and 264 to 265 (SF). H215 contacts Fe cation. A Fe cation-binding site is contributed by H272. Residues 274–288 (FLAAWPVVGIWFTAL) traverse the membrane as a helical segment. [CaMn4O5] cluster contacts are provided by H332, E333, D342, and A344. Positions 345-353 (AVEVPAING) are excised as a propeptide.

The protein belongs to the reaction center PufL/M/PsbA/D family. As to quaternary structure, PSII is composed of 1 copy each of membrane proteins PsbA, PsbB, PsbC, PsbD, PsbE, PsbF, PsbH, PsbI, PsbJ, PsbK, PsbL, PsbM, PsbT, PsbX, PsbY, PsbZ, Psb30/Ycf12, at least 3 peripheral proteins of the oxygen-evolving complex and a large number of cofactors. It forms dimeric complexes. The cofactor is The D1/D2 heterodimer binds P680, chlorophylls that are the primary electron donor of PSII, and subsequent electron acceptors. It shares a non-heme iron and each subunit binds pheophytin, quinone, additional chlorophylls, carotenoids and lipids. D1 provides most of the ligands for the Mn4-Ca-O5 cluster of the oxygen-evolving complex (OEC). There is also a Cl(-1) ion associated with D1 and D2, which is required for oxygen evolution. The PSII complex binds additional chlorophylls, carotenoids and specific lipids.. In terms of processing, tyr-161 forms a radical intermediate that is referred to as redox-active TyrZ, YZ or Y-Z. Post-translationally, C-terminally processed by CTPA; processing is essential to allow assembly of the oxygen-evolving complex and thus photosynthetic growth.

It is found in the plastid. The protein localises to the chloroplast thylakoid membrane. The catalysed reaction is 2 a plastoquinone + 4 hnu + 2 H2O = 2 a plastoquinol + O2. Photosystem II (PSII) is a light-driven water:plastoquinone oxidoreductase that uses light energy to abstract electrons from H(2)O, generating O(2) and a proton gradient subsequently used for ATP formation. It consists of a core antenna complex that captures photons, and an electron transfer chain that converts photonic excitation into a charge separation. The D1/D2 (PsbA/PsbD) reaction center heterodimer binds P680, the primary electron donor of PSII as well as several subsequent electron acceptors. This is Photosystem II protein D1 from Hordeum vulgare (Barley).